The primary structure comprises 508 residues: Metalloprotease TIKI1 (508 aa).

The first 23 residues, 1 to 23, serve as a signal peptide directing secretion; sequence MVIIWNIFLPAFLLVLAKASLRS. Over 24–485 the chain is Extracellular; the sequence is SRDSANCKLN…KYIKAAQSVS (462 aa). N-linked (GlcNAc...) asparagine glycans are attached at residues asparagine 219, asparagine 228, asparagine 277, and asparagine 335. The chain crosses the membrane as a helical span at residues 486–506; that stretch reads FSLSIPSAFLLLAWCFQQVAV. Residues 507 to 508 lie on the Cytoplasmic side of the membrane; the sequence is LQ.

Belongs to the TIKI family. The cofactor is Mn(2+). Requires Co(2+) as cofactor. As to expression, zygotically expressed in the Spemann-Mangold organizer, in particular in the head Spemann-Mangold organizer region responsible for anterior patterning.

It localises to the cell membrane. In terms of biological role, metalloprotease that acts as a negative regulator of the Wnt signaling pathway: expressed in the Spemann-Mangold organizer and is required for anterior-neural patterning in head formation in embryos. Acts by mediating the cleavage of the N-terminal residues of a subset of Wnt proteins. Following cleavage, Wnt proteins become oxidized and form large disulfide-bond oligomers, leading to their inactivation. Able to cleave wnt8. The sequence is that of Metalloprotease TIKI1 (trabd2a) from Xenopus tropicalis (Western clawed frog).